A 524-amino-acid chain; its full sequence is Sexual development regulator velC (524 aa).

Disordered regions lie at residues Asn114–Ser195, Pro322–Tyr349, Val380–Arg413, and Gly503–Glu524. Composition is skewed to polar residues over residues Thr131–Gly153 and Leu178–Ser195. The 253-residue stretch at Ser248 to Arg500 folds into the Velvet domain. The span at Pro393–Asp402 shows a compositional bias: polar residues.

The protein belongs to the velvet family. VelC subfamily. In terms of assembly, interacts with vosA.

Its subcellular location is the nucleus. Velvet-domain-containing protein that acts as a positive regulator of sexual development. Positively regulates the production of the sexual fruiting bodies called cleistothecia. In Emericella nidulans (strain FGSC A4 / ATCC 38163 / CBS 112.46 / NRRL 194 / M139) (Aspergillus nidulans), this protein is Sexual development regulator velC.